The following is a 118-amino-acid chain: Large ribosomal subunit protein bL19 (118 aa).

This sequence belongs to the bacterial ribosomal protein bL19 family.

Functionally, this protein is located at the 30S-50S ribosomal subunit interface and may play a role in the structure and function of the aminoacyl-tRNA binding site. The sequence is that of Large ribosomal subunit protein bL19 from Onion yellows phytoplasma (strain OY-M).